The primary structure comprises 38 residues: Large ribosomal subunit protein bL36 (38 aa).

Belongs to the bacterial ribosomal protein bL36 family.

In Baumannia cicadellinicola subsp. Homalodisca coagulata, this protein is Large ribosomal subunit protein bL36.